Consider the following 210-residue polypeptide: MKIVEVRHPLVQHKIGLLRDAALSTKGFRELVTELGTLLAYEATANLDTESHTQPGWAGPVTVQRIAGAKITLVPILRAGLGMLPGVLALIPAARVSVVGLQRDEETLQPVPYFERLTGRLEERDALILDPMLATGGTLMATIDMLKRAGARRIKGIFLVAAPEGLKALEAVHPDVEVYTAAIDDHLNDKGYILPGLGDAGDRIFGTRLE.

5-phospho-alpha-D-ribose 1-diphosphate-binding positions include R78, R103, and 130-138; that span reads DPMLATGGT. Residues I193 and 198 to 200 each bind uracil; that span reads GDA. D199 serves as a coordination point for 5-phospho-alpha-D-ribose 1-diphosphate.

Belongs to the UPRTase family. Mg(2+) is required as a cofactor.

It catalyses the reaction UMP + diphosphate = 5-phospho-alpha-D-ribose 1-diphosphate + uracil. The protein operates within pyrimidine metabolism; UMP biosynthesis via salvage pathway; UMP from uracil: step 1/1. Allosterically activated by GTP. Its function is as follows. Catalyzes the conversion of uracil and 5-phospho-alpha-D-ribose 1-diphosphate (PRPP) to UMP and diphosphate. This Xanthomonas euvesicatoria pv. vesicatoria (strain 85-10) (Xanthomonas campestris pv. vesicatoria) protein is Uracil phosphoribosyltransferase.